The sequence spans 391 residues: Carbamoyl phosphate synthase small chain (391 aa).

The tract at residues 1 to 199 (MVRISGFCCA…TWEFIEGPTT (199 aa)) is CPSase. L-glutamine contacts are provided by serine 61, glycine 251, and glycine 253. The Glutamine amidotransferase type-1 domain maps to 203-388 (TVVAIDFGVK…VALMRDRQPT (186 aa)). Cysteine 279 acts as the Nucleophile in catalysis. Residues leucine 280, glutamine 283, asparagine 319, glycine 321, and phenylalanine 322 each coordinate L-glutamine. Residues histidine 361 and glutamate 363 contribute to the active site.

It belongs to the CarA family. Composed of two chains; the small (or glutamine) chain promotes the hydrolysis of glutamine to ammonia, which is used by the large (or ammonia) chain to synthesize carbamoyl phosphate. Tetramer of heterodimers (alpha,beta)4.

The enzyme catalyses hydrogencarbonate + L-glutamine + 2 ATP + H2O = carbamoyl phosphate + L-glutamate + 2 ADP + phosphate + 2 H(+). The catalysed reaction is L-glutamine + H2O = L-glutamate + NH4(+). It functions in the pathway amino-acid biosynthesis; L-arginine biosynthesis; carbamoyl phosphate from bicarbonate: step 1/1. Its pathway is pyrimidine metabolism; UMP biosynthesis via de novo pathway; (S)-dihydroorotate from bicarbonate: step 1/3. Small subunit of the glutamine-dependent carbamoyl phosphate synthetase (CPSase). CPSase catalyzes the formation of carbamoyl phosphate from the ammonia moiety of glutamine, carbonate, and phosphate donated by ATP, constituting the first step of 2 biosynthetic pathways, one leading to arginine and/or urea and the other to pyrimidine nucleotides. The small subunit (glutamine amidotransferase) binds and cleaves glutamine to supply the large subunit with the substrate ammonia. The polypeptide is Carbamoyl phosphate synthase small chain (Synechococcus sp. (strain ATCC 27144 / PCC 6301 / SAUG 1402/1) (Anacystis nidulans)).